The sequence spans 89 residues: Mitochondrial import inner membrane translocase subunit Tim9 (89 aa).

Alanine 2 bears the N-acetylalanine mark. The short motif at cysteine 28–cysteine 52 is the Twin CX3C motif element. Intrachain disulfides connect cysteine 28/cysteine 52 and cysteine 32/cysteine 48.

The protein belongs to the small Tim family. In terms of assembly, heterohexamer; composed of 3 copies of TIMM9 and 3 copies of TIMM10/TIM10A, named soluble 70 kDa complex. The complex forms a 6-bladed alpha-propeller structure and associates with the TIMM22 component of the TIM22 complex. Interacts with multi-pass transmembrane proteins in transit. Also forms a complex composed of TIMM9, TIMM10/TIM10A and FXC1/TIM10B.

It is found in the mitochondrion inner membrane. Its function is as follows. Mitochondrial intermembrane chaperone that participates in the import and insertion of multi-pass transmembrane proteins into the mitochondrial inner membrane. May also be required for the transfer of beta-barrel precursors from the TOM complex to the sorting and assembly machinery (SAM complex) of the outer membrane. Acts as a chaperone-like protein that protects the hydrophobic precursors from aggregation and guide them through the mitochondrial intermembrane space. This Mus musculus (Mouse) protein is Mitochondrial import inner membrane translocase subunit Tim9 (Timm9).